Consider the following 460-residue polypeptide: Muscarinic acetylcholine receptor M1 (460 aa).

Over 1–22 the chain is Extracellular; the sequence is MNTSAPPAVSPNITVLAPGKGP. Residues N2 and N12 are each glycosylated (N-linked (GlcNAc...) asparagine). The chain crosses the membrane as a helical span at residues 23 to 48; sequence WQVAFIGITTGLLSLATVTGNLLVLI. At 49–62 the chain is on the cytoplasmic side; it reads SFKVNTELKTVNNY. A helical membrane pass occupies residues 63 to 84; the sequence is FLLSLACADLIIGTFSMNLYTT. At 85-95 the chain is on the extracellular side; it reads YLLMGHWALGT. Residues 96 to 121 form a helical membrane-spanning segment; sequence LACDLWLALDYVASNASVMNLLLISF. The cysteines at positions 98 and 178 are disulfide-linked. The Cytoplasmic portion of the chain corresponds to 122–142; it reads DRYFSVTRPLSYRAKRTPRRA. Residues 143–164 form a helical membrane-spanning segment; the sequence is ALMIGLAWLVSFVLWAPAILFW. At 165–185 the chain is on the extracellular side; it reads QYLVGERTVLAGQCYIQFLSQ. A helical membrane pass occupies residues 186–209; it reads PIITFGTAMAAFYLPVTVMCTLYW. Residues 210 to 366 lie on the Cytoplasmic side of the membrane; the sequence is RIYRETENRA…LVKEKKAART (157 aa). Disordered regions lie at residues 225 to 256, 274 to 296, and 310 to 351; these read LQGS…ETPP, WKEE…GEEP, and EAQA…QLAK. A Phosphothreonine modification is found at T230. Low complexity predominate over residues 238 to 247; it reads SSSSERSQPG. Over residues 328–343 the composition is skewed to basic residues; that stretch reads RPTRKGRERAGKGQKP. The helical transmembrane segment at 367–390 threads the bilayer; the sequence is LSAILLAFIVTWTPYNIMVLVSTF. Over 391 to 397 the chain is Extracellular; the sequence is CKDCVPE. A helical transmembrane segment spans residues 398 to 420; sequence TLWELGYWLCYVNSTINPMCYAL. Residues 421–460 lie on the Cytoplasmic side of the membrane; that stretch reads CNKAFRDTFRLLLLCRWDKRRWRKIPKRPGSVHRTPSRQC. T428 is subject to Phosphothreonine. S451 is subject to Phosphoserine. T455 is modified (phosphothreonine). The residue at position 457 (S457) is a Phosphoserine.

Belongs to the G-protein coupled receptor 1 family. Muscarinic acetylcholine receptor subfamily. CHRM1 sub-subfamily. In terms of assembly, interacts with GPRASP2. Interacts with TMEM147.

The protein resides in the cell membrane. The protein localises to the postsynaptic cell membrane. Functionally, the muscarinic acetylcholine receptor mediates various cellular responses, including inhibition of adenylate cyclase, breakdown of phosphoinositides and modulation of potassium channels through the action of G proteins. Primary transducing effect is Pi turnover. This Sus scrofa (Pig) protein is Muscarinic acetylcholine receptor M1 (CHRM1).